Consider the following 39-residue polypeptide: Alpha-conotoxin ArIA (39 aa).

The propeptide occupies 1–17; the sequence is SDGRNVAAKAFHRIGRT. Intrachain disulfides connect cysteine 22/cysteine 28 and cysteine 23/cysteine 36. The segment at 24-26 is ser-Xaa-Pro motif, crucial for potent interaction with nAChR; that stretch reads SNP. 4-hydroxyproline; in ArIA is present on proline 33.

The protein belongs to the conotoxin A superfamily. As to expression, expressed by the venom duct.

It localises to the secreted. In terms of biological role, alpha-conotoxins act on postsynaptic membranes, they bind to the nicotinic acetylcholine receptors (nAChR) and thus inhibit them. This toxin acts as a competitive inhibitor and is 3-fold more potent on alpha-7/CHRNA7 nAChRs (IC(50)=6 nM) than on alpha-3-beta-2/CHRNA3-CHRNB2 nAChR (IC(50)=18 nM). Functionally, acts as a competitive inhibitor and is 33-fold more potent on alpha-7/CHRNA7 nAChRs (IC(50)=1.8 nM) than on alpha-3-beta-2/CHRNA3-CHRNB2 nAChR (IC(50)=60.1 nM). This Conus arenatus (Sand-dusted cone) protein is Alpha-conotoxin ArIA.